A 201-amino-acid chain; its full sequence is Peptidyl-tRNA hydrolase (201 aa).

Tyr15 lines the tRNA pocket. Residue His20 is the Proton acceptor of the active site. TRNA-binding residues include Tyr66, Asn68, and Asn114.

Belongs to the PTH family. As to quaternary structure, monomer.

It is found in the cytoplasm. The catalysed reaction is an N-acyl-L-alpha-aminoacyl-tRNA + H2O = an N-acyl-L-amino acid + a tRNA + H(+). Functionally, hydrolyzes ribosome-free peptidyl-tRNAs (with 1 or more amino acids incorporated), which drop off the ribosome during protein synthesis, or as a result of ribosome stalling. Catalyzes the release of premature peptidyl moieties from peptidyl-tRNA molecules trapped in stalled 50S ribosomal subunits, and thus maintains levels of free tRNAs and 50S ribosomes. This chain is Peptidyl-tRNA hydrolase, found in Burkholderia pseudomallei (strain K96243).